A 314-amino-acid polypeptide reads, in one-letter code: MKIILANPRGFCAGVDRAISIVELALEIHGAPIYVRHEVVHNRFVVNGLRERGAVFVEELNEVPDGAIVIFSAHGVSQAVRQEAKNRNLKVFDATCPLVTKVHMQVARASRKGTKAILIGHEGHPEVQGTMGQYDNPEGGIFLVENVEDIAKLGLKDNEELTFMTQTTLSIDDTSDVIVALKAKYPAIQGPRKNDICYATTNRQQAVRELAEQSDLVIVVGSKNSSNSNRLAELASRMGVPAKLIDDSNDIEPDWLKGINTIGVTAGASAPEVLVQSVIARLKELGVDSVEELEGCEENTVFEVPKELRIKEVG.

Cys-12 is a [4Fe-4S] cluster binding site. (2E)-4-hydroxy-3-methylbut-2-enyl diphosphate contacts are provided by His-41 and His-74. Residues His-41 and His-74 each coordinate dimethylallyl diphosphate. The isopentenyl diphosphate site is built by His-41 and His-74. Cys-96 contributes to the [4Fe-4S] cluster binding site. His-124 lines the (2E)-4-hydroxy-3-methylbut-2-enyl diphosphate pocket. His-124 is a binding site for dimethylallyl diphosphate. His-124 is a binding site for isopentenyl diphosphate. Residue Glu-126 is the Proton donor of the active site. Thr-167 contributes to the (2E)-4-hydroxy-3-methylbut-2-enyl diphosphate binding site. Cys-197 contacts [4Fe-4S] cluster. 4 residues coordinate (2E)-4-hydroxy-3-methylbut-2-enyl diphosphate: Ser-225, Ser-226, Asn-227, and Ser-269. Dimethylallyl diphosphate contacts are provided by Ser-225, Ser-226, Asn-227, and Ser-269. Residues Ser-225, Ser-226, Asn-227, and Ser-269 each coordinate isopentenyl diphosphate.

The protein belongs to the IspH family. [4Fe-4S] cluster serves as cofactor.

It carries out the reaction isopentenyl diphosphate + 2 oxidized [2Fe-2S]-[ferredoxin] + H2O = (2E)-4-hydroxy-3-methylbut-2-enyl diphosphate + 2 reduced [2Fe-2S]-[ferredoxin] + 2 H(+). The catalysed reaction is dimethylallyl diphosphate + 2 oxidized [2Fe-2S]-[ferredoxin] + H2O = (2E)-4-hydroxy-3-methylbut-2-enyl diphosphate + 2 reduced [2Fe-2S]-[ferredoxin] + 2 H(+). It participates in isoprenoid biosynthesis; dimethylallyl diphosphate biosynthesis; dimethylallyl diphosphate from (2E)-4-hydroxy-3-methylbutenyl diphosphate: step 1/1. Its pathway is isoprenoid biosynthesis; isopentenyl diphosphate biosynthesis via DXP pathway; isopentenyl diphosphate from 1-deoxy-D-xylulose 5-phosphate: step 6/6. Functionally, catalyzes the conversion of 1-hydroxy-2-methyl-2-(E)-butenyl 4-diphosphate (HMBPP) into a mixture of isopentenyl diphosphate (IPP) and dimethylallyl diphosphate (DMAPP). Acts in the terminal step of the DOXP/MEP pathway for isoprenoid precursor biosynthesis. This Mannheimia succiniciproducens (strain KCTC 0769BP / MBEL55E) protein is 4-hydroxy-3-methylbut-2-enyl diphosphate reductase.